We begin with the raw amino-acid sequence, 611 residues long: Dihydroxy-acid dehydratase (611 aa).

Asp81 provides a ligand contact to Mg(2+). Position 122 (Cys122) interacts with [2Fe-2S] cluster. Mg(2+) contacts are provided by Asp123 and Lys124. N6-carboxylysine is present on Lys124. Residue Cys195 participates in [2Fe-2S] cluster binding. A Mg(2+)-binding site is contributed by Glu491. Residue Ser517 is the Proton acceptor of the active site.

The protein belongs to the IlvD/Edd family. As to quaternary structure, homodimer. [2Fe-2S] cluster is required as a cofactor. Requires Mg(2+) as cofactor.

The catalysed reaction is (2R)-2,3-dihydroxy-3-methylbutanoate = 3-methyl-2-oxobutanoate + H2O. The enzyme catalyses (2R,3R)-2,3-dihydroxy-3-methylpentanoate = (S)-3-methyl-2-oxopentanoate + H2O. The protein operates within amino-acid biosynthesis; L-isoleucine biosynthesis; L-isoleucine from 2-oxobutanoate: step 3/4. It participates in amino-acid biosynthesis; L-valine biosynthesis; L-valine from pyruvate: step 3/4. Its function is as follows. Functions in the biosynthesis of branched-chain amino acids. Catalyzes the dehydration of (2R,3R)-2,3-dihydroxy-3-methylpentanoate (2,3-dihydroxy-3-methylvalerate) into 2-oxo-3-methylpentanoate (2-oxo-3-methylvalerate) and of (2R)-2,3-dihydroxy-3-methylbutanoate (2,3-dihydroxyisovalerate) into 2-oxo-3-methylbutanoate (2-oxoisovalerate), the penultimate precursor to L-isoleucine and L-valine, respectively. This chain is Dihydroxy-acid dehydratase, found in Pasteurella multocida (strain Pm70).